The chain runs to 339 residues: Large ribosomal subunit protein uL10 (339 aa).

The disordered stretch occupies residues 305–339 (TQPQQEEKVEEAEEEEEEEEASEEDALAGLGALFG). Acidic residues predominate over residues 312–330 (KVEEAEEEEEEEEASEEDA).

This sequence belongs to the universal ribosomal protein uL10 family. Part of the 50S ribosomal subunit. Forms part of the ribosomal stalk which helps the ribosome interact with GTP-bound translation factors. Forms a heptameric L10(L12)2(L12)2(L12)2 complex, where L10 forms an elongated spine to which the L12 dimers bind in a sequential fashion.

Its function is as follows. Forms part of the ribosomal stalk, playing a central role in the interaction of the ribosome with GTP-bound translation factors. In Thermococcus onnurineus (strain NA1), this protein is Large ribosomal subunit protein uL10.